The chain runs to 793 residues: Probable exo-1,4-beta-xylosidase xlnD (793 aa).

Residues 1–20 form the signal peptide; that stretch reads MPRVASVAAVLAALLPSALG. N-linked (GlcNAc...) asparagine glycans are attached at residues Asn-23, Asn-87, and Asn-142. The active site involves Asp-310. Residues Asn-326, Asn-385, Asn-404, Asn-440, Asn-477, Asn-518, Asn-559, Asn-614, Asn-652, Asn-679, and Asn-701 are each glycosylated (N-linked (GlcNAc...) asparagine).

It belongs to the glycosyl hydrolase 3 family.

The protein resides in the secreted. The enzyme catalyses Hydrolysis of (1-&gt;4)-beta-D-xylans, to remove successive D-xylose residues from the non-reducing termini.. It participates in glycan degradation; xylan degradation. Xylan 1,4-beta-xylosidase involved in the hydrolysis of xylan, a major structural heterogeneous polysaccharide found in plant biomass representing the second most abundant polysaccharide in the biosphere, after cellulose. This chain is Probable exo-1,4-beta-xylosidase xlnD (xlnD), found in Aspergillus terreus (strain NIH 2624 / FGSC A1156).